The sequence spans 631 residues: Beta-galactosidase-1-like protein 3 (631 aa).

Glutamate 203 serves as the catalytic Proton donor. The active-site Nucleophile is glutamate 277.

It belongs to the glycosyl hydrolase 35 family.

The polypeptide is Beta-galactosidase-1-like protein 3 (Glb1l3) (Rattus norvegicus (Rat)).